The primary structure comprises 486 residues: Patatin-like phospholipase domain-containing protein 2 (486 aa).

Over Met1–Trp8 the chain is Cytoplasmic. Residues Asn9–Leu29 traverse the membrane as a helical segment. In terms of domain architecture, PNPLA spans Ile10 to Lys179. Positions Gly14 to Gly19 match the GXGXXG motif. At Arg30–His42 the chain is on the extracellular side. An N-linked (GlcNAc...) asparagine glycan is attached at Asn39. A helical transmembrane segment spans residues Ile43–Gly63. Positions Gly45 to Gly49 match the GXSXG motif. The active-site Nucleophile is the Ser47. The Cytoplasmic segment spans residues Glu64–Glu137. Lys92 participates in a covalent cross-link: Glycyl lysine isopeptide (Lys-Gly) (interchain with G-Cter in ubiquitin). Residues Leu138–Thr158 form a helical membrane-spanning segment. The Extracellular segment spans residues Leu159 to Arg331. Asp166 (proton acceptor) is an active-site residue. A DGA/G motif is present at residues Asp166 to Gly168. A helical transmembrane segment spans residues Leu332–Ile352. The Cytoplasmic portion of the chain corresponds to Arg353 to Cys486. Phosphoserine; in vitro is present on Ser374. A phosphoserine; by PKA mark is found at Ser396 and Ser406. Ser430 and Ser468 each carry phosphoserine; in vitro. Positions Ala465 to Thr476 are enriched in low complexity. The disordered stretch occupies residues Ala465–Cys486. Positions Pro477–Cys486 are enriched in pro residues.

Interacts with ABHD5; this association stimulates PNPLA2 triglyceride hydrolase activity. Interacts with SERPINF1; this interaction stimulates the phospholipase A2 activity of PNPLA2. Despite a colocalization in lipid droplets, it probably does not interact with PLIN. Interacts with PLIN5; prevents interaction with ABHD5. Interacts with FAF2. Post-translationally, phosphorylation at Ser-406 by PKA is increased during fasting and moderate intensity exercise, and moderately increases lipolytic activity. Ubiquitinated by PEX2 in response to reactive oxygen species (ROS), leading to its degradation. Ubiquitination is stimulated by LDAH. In terms of tissue distribution, expressed at high levels in white and brown adipose tissue, and to a lesser degree in testis and cardiac muscle. Barely detected in liver, spleen, thymus, kidney, skeletal muscle, and brain. Among the white adipose depots, gonadal fat showed the highest level of expression compared with inguinal and renal white adipose tissues.

The protein resides in the lipid droplet. It is found in the cell membrane. The protein localises to the cytoplasm. The catalysed reaction is a triacylglycerol + H2O = a diacylglycerol + a fatty acid + H(+). It catalyses the reaction a triacylglycerol + H2O = a 1,2-diacylglycerol + a fatty acid + H(+). It carries out the reaction a triacylglycerol + H2O = a 1,3-diacylglycerol + a fatty acid + H(+). The enzyme catalyses a triacyl-sn-glycerol + H2O = a 2,3-diacyl-sn-glycerol + a fatty acid + H(+). The catalysed reaction is a triacyl-sn-glycerol + H2O = a 1,3-diacyl-sn-glycerol + a fatty acid + H(+). It catalyses the reaction 1,2,3-tri-(9Z-octadecenoyl)-glycerol + H2O = 1,3-di-(9Z-octadecenoyl)-glycerol + (9Z)-octadecenoate + H(+). It carries out the reaction 1,2,3-tri-(9Z)-hexadecenoylglycerol + H2O = 1,3-di-(9Z)-hexadecenoylglycerol + (9Z)-hexadecenoate + H(+). The enzyme catalyses 1,2,3-tri-(9Z,12Z)-octadecadienoylglycerol + H2O = 1,3-di-(9Z,12Z)-octadecadienoylglycerol + (9Z,12Z)-octadecadienoate + H(+). The catalysed reaction is 1,2,3-tri-(9Z,12Z,15Z)-octadecatrienoylglycerol + H2O = 1,3-di-(9Z,12Z,15Z)-octadecatrienoylglycerol + (9Z,12Z,15Z)-octadecatrienoate + H(+). It catalyses the reaction 1,3-di-(9Z)-octadecenoyl-2-hexadecanoylglycerol + H2O = 1,3-di-(9Z-octadecenoyl)-glycerol + hexadecanoate + H(+). It carries out the reaction 1,2-di-(9Z)-octadecenoyl-3-hexadecanoyl-sn-glycerol + H2O = 1-(9Z)-octadecenoyl-3-hexadecanoyl-sn-glycerol + (9Z)-octadecenoate + H(+). The enzyme catalyses 1-hexadecanoyl-2,3-di-(9Z)-octadecenoyl-sn-glycerol + H2O = 1-hexadecanoyl-3-(9Z)-octadecenoyl-sn-glycerol + (9Z)-octadecenoate + H(+). The catalysed reaction is 1,2,3-tri-(9Z-octadecenoyl)-glycerol + H2O = 2,3-di-(9Z)-octadecenoyl-sn-glycerol + (9Z)-octadecenoate + H(+). It catalyses the reaction 1,2,3-tri-(9Z)-hexadecenoylglycerol + H2O = 2,3-di-(9Z)-hexadecenoyl-sn-glycerol + (9Z)-hexadecenoate + H(+). It carries out the reaction 1,2,3-tri-(9Z,12Z)-octadecadienoylglycerol + H2O = 2,3-di-(9Z,12Z)-octadecadienoyl-sn-glycerol + (9Z,12Z)-octadecadienoate + H(+). The enzyme catalyses 1,2,3-tri-(9Z,12Z,15Z)-octadecatrienoylglycerol + H2O = 2,3-di-(9Z,12Z,15Z)-octadecatrienoyl-sn-glycerol + (9Z,12Z,15Z)-octadecatrienoate + H(+). The catalysed reaction is 1,3-di-(9Z)-octadecenoyl-2-hexadecanoylglycerol + H2O = 2-hexadecanoyl-3-(9Z)-octadecenoyl-sn-glycerol + (9Z)-octadecenoate + H(+). It catalyses the reaction 1-hexadecanoyl-2,3-di-(9Z)-octadecenoyl-sn-glycerol + H2O = 2,3-di-(9Z)-octadecenoyl-sn-glycerol + hexadecanoate + H(+). It carries out the reaction 1,2-di-(9Z)-octadecenoyl-3-hexadecanoyl-sn-glycerol + H2O = 2-(9Z-octadecenoyl)-3-hexadecanoyl-sn-glycerol + (9Z)-octadecenoate + H(+). The enzyme catalyses 1,2-di-(9Z-octadecenoyl)-glycerol + (9Z)-octadecenoate + H(+) = 1,2,3-tri-(9Z-octadecenoyl)-glycerol + H2O. The catalysed reaction is a 1-acylglycerol + a 1,3-diacylglycerol = a triacylglycerol + glycerol. It catalyses the reaction a 1-acylglycerol + a 1,2-diacylglycerol = a triacylglycerol + glycerol. It carries out the reaction 2 a 1-acylglycerol = a 1,2-diacylglycerol + glycerol. The enzyme catalyses a triacylglycerol + all-trans-retinol = an all-trans-retinyl ester + a diacylglycerol. The catalysed reaction is 1-(9Z-octadecenoyl)-glycerol + 1,3-di-(9Z-octadecenoyl)-glycerol = 1,2,3-tri-(9Z-octadecenoyl)-glycerol + glycerol. It catalyses the reaction 1-(9Z-octadecenoyl)-glycerol + 1,2-di-(9Z-octadecenoyl)-glycerol = 1,2,3-tri-(9Z-octadecenoyl)-glycerol + glycerol. It carries out the reaction 2 1-(9Z-octadecenoyl)-glycerol = 1,2-di-(9Z-octadecenoyl)-glycerol + glycerol. The enzyme catalyses 1,2,3-tri-(9Z-octadecenoyl)-glycerol + all-trans-retinol = all-trans-retinyl 9Z-octadecenoate + di-(9Z)-octadecenoylglycerol. The catalysed reaction is a 1,2-diacyl-sn-glycero-3-phosphocholine + H2O = a 1-acyl-sn-glycero-3-phosphocholine + a fatty acid + H(+). It catalyses the reaction 1,2,3-tri-(9Z-octadecenoyl)-glycerol + 9-hydroxy-octadecanoate = 9-(9Z-octadecenoyloxy)-octadecanoate + 2,3-di-(9Z)-octadecenoyl-sn-glycerol. It carries out the reaction 1-hexadecanoyl-2,3-di-(9Z)-octadecenoyl-sn-glycerol + 9-hydroxy-octadecanoate = 9-hexadecanoyloxy-octadecanoate + 2,3-di-(9Z)-octadecenoyl-sn-glycerol. The enzyme catalyses 1,2,3-tri-(10Z)-heptadecenoylglycerol + 9-hydroxy-octadecanoate = 2,3-di-(10Z-heptadecenoyl)-sn-glycerol + 9-(10Z-heptadecenoyloxy)-octadecanoate. The catalysed reaction is 1,2,3-tri-(9Z,12Z)-octadecadienoylglycerol + 9-hydroxy-octadecanoate = 2,3-di-(9Z,12Z)-octadecadienoyl-sn-glycerol + 9-(9Z,12Z-octadecadienoyloxy)-octadecanoate. It catalyses the reaction 1,2,3-tri-(9Z)-hexadecenoylglycerol + 9-hydroxy-octadecanoate = 2,3-di-(9Z)-hexadecenoyl-sn-glycerol + 9-(9Z-hexadecenoyloxy)-octadecanoate. It carries out the reaction 9-hydroxy-octadecanoate + 1,2-di-(9Z-octadecenoyl)-sn-glycerol = 9-(9Z-octadecenoyloxy)-octadecanoate + 2-(9Z-octadecenoyl)-glycerol. The enzyme catalyses 1-hexadecanoyl-2,3-di-(9Z)-octadecenoyl-sn-glycerol + 9-hydroxy-octadecanoate = 1-hexadecanoyl-3-(9Z)-octadecenoyl-sn-glycerol + 9-(9Z-octadecenoyloxy)-octadecanoate. It functions in the pathway glycerolipid metabolism; triacylglycerol degradation. With respect to regulation, stimulated by PKA-dependent PLIN phosphorylation. Its function is as follows. Catalyzes the initial step in triglyceride hydrolysis in adipocyte and non-adipocyte lipid droplets. Exhibits a strong preference for the hydrolysis of long-chain fatty acid esters at the sn-2 position of the glycerol backbone and acts coordinately with LIPE/HLS and DGAT2 within the lipolytic cascade. Also possesses acylglycerol transacylase and phospholipase A2 activities. Transfers fatty acid from triglyceride to retinol, hydrolyzes retinylesters, and generates 1,3-diacylglycerol from triglycerides. Regulates adiposome size and may be involved in the degradation of adiposomes. Catalyzes the formation of an ester bond between hydroxy fatty acids and fatty acids derived from triglycerides or diglycerides to generate fatty acid esters of hydroxy fatty acids (FAHFAs) in adipocytes. Acts antagonistically with LDAH in regulation of cellular lipid stores. Inhibits LDAH-stimulated lipid droplet fusion. May play an important role in energy homeostasis. May play a role in the response of the organism to starvation, enhancing hydrolysis of triglycerides and providing free fatty acids to other tissues to be oxidized in situations of energy depletion. This chain is Patatin-like phospholipase domain-containing protein 2, found in Mus musculus (Mouse).